The primary structure comprises 390 residues: LL-diaminopimelate aminotransferase 2 (390 aa).

2 residues coordinate substrate: Tyr-13 and Gly-38. Residues Tyr-67, 102–103 (SK), Tyr-127, Asn-177, Tyr-208, and 236–238 (SLS) each bind pyridoxal 5'-phosphate. 3 residues coordinate substrate: Lys-103, Tyr-127, and Asn-177. Lys-239 is subject to N6-(pyridoxal phosphate)lysine. A pyridoxal 5'-phosphate-binding site is contributed by Arg-247. Arg-365 contacts substrate.

This sequence belongs to the class-I pyridoxal-phosphate-dependent aminotransferase family. LL-diaminopimelate aminotransferase subfamily. In terms of assembly, homodimer. It depends on pyridoxal 5'-phosphate as a cofactor.

It carries out the reaction (2S,6S)-2,6-diaminopimelate + 2-oxoglutarate = (S)-2,3,4,5-tetrahydrodipicolinate + L-glutamate + H2O + H(+). Its pathway is amino-acid biosynthesis; L-lysine biosynthesis via DAP pathway; LL-2,6-diaminopimelate from (S)-tetrahydrodipicolinate (aminotransferase route): step 1/1. Involved in the synthesis of meso-diaminopimelate (m-DAP or DL-DAP), required for both lysine and peptidoglycan biosynthesis. Catalyzes the direct conversion of tetrahydrodipicolinate to LL-diaminopimelate. The sequence is that of LL-diaminopimelate aminotransferase 2 from Nostoc sp. (strain PCC 7120 / SAG 25.82 / UTEX 2576).